Here is a 230-residue protein sequence, read N- to C-terminus: Flagellar L-ring protein (230 aa).

The N-terminal stretch at methionine 1–glycine 21 is a signal peptide. Cysteine 22 carries N-palmitoyl cysteine lipidation. The S-diacylglycerol cysteine moiety is linked to residue cysteine 22. The interval proline 34–isoleucine 53 is disordered. Over residues threonine 36 to serine 46 the composition is skewed to pro residues.

This sequence belongs to the FlgH family. As to quaternary structure, the basal body constitutes a major portion of the flagellar organelle and consists of four rings (L,P,S, and M) mounted on a central rod.

It is found in the cell outer membrane. Its subcellular location is the bacterial flagellum basal body. Its function is as follows. Assembles around the rod to form the L-ring and probably protects the motor/basal body from shearing forces during rotation. This Bordetella parapertussis (strain 12822 / ATCC BAA-587 / NCTC 13253) protein is Flagellar L-ring protein.